The sequence spans 250 residues: Imidazole glycerol phosphate synthase subunit HisF (250 aa).

Active-site residues include D11 and D130.

This sequence belongs to the HisA/HisF family. Heterodimer of HisH and HisF.

It localises to the cytoplasm. It carries out the reaction 5-[(5-phospho-1-deoxy-D-ribulos-1-ylimino)methylamino]-1-(5-phospho-beta-D-ribosyl)imidazole-4-carboxamide + L-glutamine = D-erythro-1-(imidazol-4-yl)glycerol 3-phosphate + 5-amino-1-(5-phospho-beta-D-ribosyl)imidazole-4-carboxamide + L-glutamate + H(+). It participates in amino-acid biosynthesis; L-histidine biosynthesis; L-histidine from 5-phospho-alpha-D-ribose 1-diphosphate: step 5/9. Its function is as follows. IGPS catalyzes the conversion of PRFAR and glutamine to IGP, AICAR and glutamate. The HisF subunit catalyzes the cyclization activity that produces IGP and AICAR from PRFAR using the ammonia provided by the HisH subunit. This is Imidazole glycerol phosphate synthase subunit HisF from Bacteroides fragilis (strain YCH46).